The primary structure comprises 828 residues: Glycerol-3-phosphate acyltransferase 1, mitochondrial (828 aa).

At 1–87 the chain is on the cytoplasmic side; the sequence is MDESALTLGT…FFNPSIPSLG (87 aa). An important for mitochondrial localization region spans residues 80–120; sequence NPSIPSLGLRNVIYINETHTRHRGWLARRLSYVLFIQERDV. An intramembrane segment occupies 88–118; sequence LRNVIYINETHTRHRGWLARRLSYVLFIQER. Topologically, residues 119–828 are cytoplasmic; it reads DVHKGMFATN…LEYILSFVVL (710 aa). Residues 230-235 carry the HXXXXD motif motif; that stretch reads HRSHID. CoA-binding residues include Arg-278, Arg-279, Lys-288, Arg-293, and Arg-328. At Ser-380 the chain carries Phosphoserine. Residues 435 to 455 are disordered; that stretch reads SRPSDAADEGRDTSINESRNA. Positions 442-455 are enriched in basic and acidic residues; the sequence is DEGRDTSINESRNA. Arg-462 is a CoA binding site. Phosphoserine is present on residues Ser-688 and Ser-695. An N6-acetyllysine mark is found at Lys-780 and Lys-784.

The protein belongs to the GPAT/DAPAT family.

It is found in the mitochondrion outer membrane. It carries out the reaction sn-glycerol 3-phosphate + an acyl-CoA = a 1-acyl-sn-glycero-3-phosphate + CoA. It catalyses the reaction (9Z,12Z)-octadecadienoyl-CoA + sn-glycerol 3-phosphate = 1-(9Z,12Z)-octadecadienoyl-sn-glycero-3-phosphate + CoA. The catalysed reaction is sn-glycerol 3-phosphate + (9Z)-octadecenoyl-CoA = 1-(9Z-octadecenoyl)-sn-glycero-3-phosphate + CoA. The enzyme catalyses sn-glycerol 3-phosphate + octadecanoyl-CoA = 1-octadecanoyl-sn-glycero-3-phosphate + CoA. It carries out the reaction sn-glycerol 3-phosphate + hexadecanoyl-CoA = 1-hexadecanoyl-sn-glycero-3-phosphate + CoA. It catalyses the reaction dodecanoyl-CoA + sn-glycerol 3-phosphate = 1-dodecanoyl-sn-glycerol 3-phosphate + CoA. The catalysed reaction is 1-acyl-sn-glycero-3-phospho-(1'-sn-glycerol) + an acyl-CoA = a 1,2-diacyl-sn-glycero-3-phospho-(1'-sn-glycerol) + CoA. It participates in phospholipid metabolism; CDP-diacylglycerol biosynthesis; CDP-diacylglycerol from sn-glycerol 3-phosphate: step 1/3. Mitochondrial membrane protein that catalyzes the essential first step of biosynthesis of glycerolipids such as triglycerides, phosphatidic acids and lysophosphatidic acids. Esterifies acyl-group from acyl-coenzyme A (acyl-CoA) to the sn-1 position of glycerol-3-phosphate, to produce lysophosphatidic acid. Has a narrow hydrophobic binding cleft that selects for a linear acyl chain. Catalytic activity is higher for substrates with a 16-carbon acyl chain. This chain is Glycerol-3-phosphate acyltransferase 1, mitochondrial, found in Homo sapiens (Human).